We begin with the raw amino-acid sequence, 112 residues long: MAKFKIKTGDLVQVITGKNKGEQGKVLRVITETSRVVVEGVNVVTKHKRANAQGEAGGLVKSEAPIHISNVMLGDPETGKPTRVGYRTETVERDGKQKTVRVRVSKSTGKDL.

A disordered region spans residues 92 to 112 (ERDGKQKTVRVRVSKSTGKDL).

It belongs to the universal ribosomal protein uL24 family. In terms of assembly, part of the 50S ribosomal subunit.

In terms of biological role, one of two assembly initiator proteins, it binds directly to the 5'-end of the 23S rRNA, where it nucleates assembly of the 50S subunit. Its function is as follows. One of the proteins that surrounds the polypeptide exit tunnel on the outside of the subunit. The sequence is that of Large ribosomal subunit protein uL24 from Kocuria rhizophila (strain ATCC 9341 / DSM 348 / NBRC 103217 / DC2201).